Reading from the N-terminus, the 765-residue chain is SNF-related serine/threonine-protein kinase (765 aa).

In terms of domain architecture, Protein kinase spans Tyr-16 to Leu-269. ATP-binding positions include Leu-22–Val-30 and Lys-45. The active-site Proton acceptor is the Asp-139. A Phosphoserine modification is found at Ser-162. Thr-173 is subject to Phosphothreonine; by LKB1. In terms of domain architecture, UBA spans Ser-291–Glu-334. A phosphoserine mark is found at Ser-362, Ser-390, Ser-482, Ser-495, and Ser-518. Residues Leu-512–Gln-634 form a disordered region. The segment covering Val-522 to Gln-532 has biased composition (basic residues). Positions Gly-533–Glu-542 are enriched in low complexity. An Omega-N-methylarginine modification is found at Arg-534. Residues Glu-549–Ser-558 are compositionally biased toward basic and acidic residues. Gly residues predominate over residues Ala-603 to Gly-614. Ser-607 bears the Phosphoserine mark.

The protein belongs to the protein kinase superfamily. CAMK Ser/Thr protein kinase family. The cofactor is Mg(2+). In terms of processing, autophosphorylated. Phosphorylation on Thr-173 by STK11/LKB1 in complex with STE20-related adapter-alpha (STRADA) pseudo kinase and CAB39. Expressed in hematopoietic progenitor cells and leukemic cell lines. Weakly expressed in the testis.

Its subcellular location is the nucleus. The enzyme catalyses L-seryl-[protein] + ATP = O-phospho-L-seryl-[protein] + ADP + H(+). The catalysed reaction is L-threonyl-[protein] + ATP = O-phospho-L-threonyl-[protein] + ADP + H(+). Activated by phosphorylation on Thr-173. Its function is as follows. May play a role in hematopoietic cell proliferation or differentiation. Potential mediator of neuronal apoptosis. The protein is SNF-related serine/threonine-protein kinase of Homo sapiens (Human).